The chain runs to 431 residues: ATP-dependent protease ATPase subunit HslU (431 aa).

ATP contacts are provided by residues V18, 60–65, D244, E309, and R381; that span reads GVGKTE.

Belongs to the ClpX chaperone family. HslU subfamily. A double ring-shaped homohexamer of HslV is capped on each side by a ring-shaped HslU homohexamer. The assembly of the HslU/HslV complex is dependent on binding of ATP.

Its subcellular location is the cytoplasm. Its function is as follows. ATPase subunit of a proteasome-like degradation complex; this subunit has chaperone activity. The binding of ATP and its subsequent hydrolysis by HslU are essential for unfolding of protein substrates subsequently hydrolyzed by HslV. HslU recognizes the N-terminal part of its protein substrates and unfolds these before they are guided to HslV for hydrolysis. This Caulobacter sp. (strain K31) protein is ATP-dependent protease ATPase subunit HslU.